We begin with the raw amino-acid sequence, 179 residues long: Large ribosomal subunit protein bL9 (179 aa).

Residues 156–179 (PEGAPVPVAEEPAAEAEQAEVAAE) are disordered. Residues 157–166 (EGAPVPVAEE) are compositionally biased toward low complexity. Acidic residues predominate over residues 167-179 (PAAEAEQAEVAAE).

It belongs to the bacterial ribosomal protein bL9 family.

In terms of biological role, binds to the 23S rRNA. The polypeptide is Large ribosomal subunit protein bL9 (Porphyromonas gingivalis (strain ATCC 33277 / DSM 20709 / CIP 103683 / JCM 12257 / NCTC 11834 / 2561)).